Here is a 91-residue protein sequence, read N- to C-terminus: Probable Fe(2+)-trafficking protein (91 aa).

It belongs to the Fe(2+)-trafficking protein family. As to quaternary structure, monomer.

In terms of biological role, could be a mediator in iron transactions between iron acquisition and iron-requiring processes, such as synthesis and/or repair of Fe-S clusters in biosynthetic enzymes. The chain is Probable Fe(2+)-trafficking protein from Citrobacter koseri (strain ATCC BAA-895 / CDC 4225-83 / SGSC4696).